Consider the following 419-residue polypeptide: UPF0229 protein Tbd_1233 (419 aa).

Residues 85-108 (GDRIDRPAGEGGGGSGGSPDGEGM) form a disordered region. Positions 93–104 (GEGGGGSGGSPD) are enriched in gly residues.

Belongs to the UPF0229 family.

The chain is UPF0229 protein Tbd_1233 from Thiobacillus denitrificans (strain ATCC 25259 / T1).